The sequence spans 174 residues: RNA polymerase sigma factor CarQ (174 aa).

The Polymerase core binding signature appears at 39–52 (DLLQATFLSVIRSR). A disordered region spans residues 86 to 106 (YASREDTATPASAAPDDSDPS). A DNA-binding region (H-T-H motif) is located at residues 136–155 (FEEIGALRGISPGAARLRAH).

This sequence belongs to the sigma-70 factor family. ECF subfamily.

Sigma factors are initiation factors that promote the attachment of RNA polymerase to specific initiation sites and are then released. This sigma factor regulates genes for the light induced biosynthesis of carotenoids. This Myxococcus xanthus protein is RNA polymerase sigma factor CarQ (carQ).